Consider the following 389-residue polypeptide: Probable tRNA pseudouridine synthase D 1 (389 aa).

The active-site Nucleophile is aspartate 63. In terms of domain architecture, TRUD spans 135–345 (GAPNYYDDQR…KYTKRPIISI (211 aa)).

Belongs to the pseudouridine synthase TruD family.

The catalysed reaction is uridine(13) in tRNA = pseudouridine(13) in tRNA. Functionally, could be responsible for synthesis of pseudouridine from uracil-13 in transfer RNAs. This Methanococcus maripaludis (strain DSM 14266 / JCM 13030 / NBRC 101832 / S2 / LL) protein is Probable tRNA pseudouridine synthase D 1 (truD1).